Here is a 369-residue protein sequence, read N- to C-terminus: Superinfection exclusion protein (369 aa).

The first 15 residues, 1–15 (MIALLILSLTCSAST), serve as a signal peptide directing secretion.

Belongs to the serpin family. Orthopoxvirus OPG040 subfamily. As to quaternary structure, interacts with A56 protein.

The protein localises to the virion membrane. The protein resides in the host cell membrane. Its function is as follows. Prevents cell to cell fusion via its interaction with A56 protein. The A56-K2 complex associates with components of the entry fusion complex (EFC) presumably to avoid superinfection and syncytium formation. This chain is Superinfection exclusion protein (OPG040), found in Vaccinia virus (strain Ankara) (VACV).